We begin with the raw amino-acid sequence, 247 residues long: Chymase (247 aa).

A signal peptide spans 1 to 19 (MLLLPLPLLLFFLCSRAEA). Positions 20–21 (GE) are cleaved as a propeptide — activation peptide. The Peptidase S1 domain maps to 22–245 (IIGGTECKPH…YRPWINKILQ (224 aa)). A disulfide bridge links C51 with C67. The active-site Charge relay system is H66. N-linked (GlcNAc...) asparagine glycosylation is found at N80 and N103. The Charge relay system role is filled by D110. Intrachain disulfides connect C144/C209 and C175/C188. The Charge relay system role is filled by S203.

The protein belongs to the peptidase S1 family. Granzyme subfamily.

It is found in the secreted. It localises to the cytoplasmic granule. The enzyme catalyses Preferential cleavage: Phe-|-Xaa &gt; Tyr-|-Xaa &gt; Trp-|-Xaa &gt; Leu-|-Xaa.. In terms of biological role, major secreted protease of mast cells with suspected roles in vasoactive peptide generation, extracellular matrix degradation, and regulation of gland secretion. This Macaca fascicularis (Crab-eating macaque) protein is Chymase (CMA1).